Here is a 1092-residue protein sequence, read N- to C-terminus: Probable cellulose synthase A catalytic subunit 5 [UDP-forming] (1092 aa).

Residues 1 to 279 (MEASAGLVAG…SSSLVNPYRM (279 aa)) lie on the Cytoplasmic side of the membrane. Zn(2+)-binding residues include cysteine 39, cysteine 42, cysteine 58, cysteine 61, cysteine 66, cysteine 69, cysteine 81, and cysteine 84. An RING-type; degenerate zinc finger spans residues 39 to 85 (CQICGDDVGLTPDGEPFVACNECAFPVCRDCYEYERREGTQNCPQCK). A helical membrane pass occupies residues 280–300 (IIIIRLVVLGFFFHYRVMHPV). The Extracellular segment spans residues 301–302 (PD). The chain crosses the membrane as a helical span at residues 303 to 323 (AFALWLISVICEIWFAMSWIL). Residues 324–868 (DQFPKWFPIE…CLERFSYINS (545 aa)) are Cytoplasmic-facing. Serine 362, lysine 368, glutamate 369, and aspartate 398 together coordinate UDP-alpha-D-glucose. The active site involves aspartate 398. A coiled-coil region spans residues 450-479 (NFVRERRAMKREYEEFKVRINALVAKAQKV). Lysine 539 contributes to the UDP-alpha-D-glucose binding site. Mn(2+) contacts are provided by lysine 540 and aspartate 564. Residue aspartate 792 is part of the active site. Residues 869–889 (IVYPWTSIPLLAYCTLPAICL) traverse the membrane as a helical segment. At 890–901 (LTGKFITPELTN) the chain is on the extracellular side. Residues 902–922 (IASLWFMSLFICIFATGILEM) traverse the membrane as a helical segment. The Cytoplasmic portion of the chain corresponds to 923-938 (RWSGVGIDDWWRNEQF). A helical membrane pass occupies residues 939-959 (WVIGGVSSHLFAVFQGLLKVI). Residues 960–987 (AGIDTSFTVTSKGGDDEEFSELYTFKWT) lie on the Extracellular side of the membrane. A helical membrane pass occupies residues 988–1008 (TLLIPPTTLLLLNFIGVVAGV). Topologically, residues 1009–1019 (SNAINNGYESW) are cytoplasmic. A helical transmembrane segment spans residues 1020–1040 (GPLFGKLFFAFWVIVHLYPFL). At 1041 to 1049 (KGLVGRQNR) the chain is on the extracellular side. A helical membrane pass occupies residues 1050–1070 (TPTIVIVWSILLASIFSLLWV). Residues 1071-1092 (RIDPFLAKNDGPLLEECGLDCN) are Cytoplasmic-facing.

The protein belongs to the glycosyltransferase 2 family. Plant cellulose synthase subfamily. Mn(2+) serves as cofactor. It depends on Zn(2+) as a cofactor.

It is found in the cell membrane. The catalysed reaction is [(1-&gt;4)-beta-D-glucosyl](n) + UDP-alpha-D-glucose = [(1-&gt;4)-beta-D-glucosyl](n+1) + UDP + H(+). It participates in glycan metabolism; plant cellulose biosynthesis. Functionally, probable catalytic subunit of cellulose synthase terminal complexes ('rosettes'), required for beta-1,4-glucan microfibril crystallization, a major mechanism of the cell wall formation. This is Probable cellulose synthase A catalytic subunit 5 [UDP-forming] (CESA5) from Oryza sativa subsp. indica (Rice).